The primary structure comprises 276 residues: Rhomboid protease GlpG (276 aa).

6 helical membrane passes run 96–116 (VTWLIMIACILVFVVMSIVGA), 142–162 (AFMHFSLMHILFNLLWWWYIG), 169–189 (LGSGKLIVITVISALLSGYVQ), 192–212 (FSGPWFGGLSGVVYALMGYAW), 229–249 (LIAFALIWIVAGWFDVFGMSM), and 250–270 (ANGAHIAGLAVGLAMAFADTV). Catalysis depends on Ser201, which acts as the Nucleophile. Residue His254 is part of the active site.

The protein belongs to the peptidase S54 family.

It localises to the cell inner membrane. It catalyses the reaction Cleaves type-1 transmembrane domains using a catalytic dyad composed of serine and histidine that are contributed by different transmembrane domains.. Functionally, rhomboid-type serine protease that catalyzes intramembrane proteolysis. This is Rhomboid protease GlpG from Citrobacter koseri (strain ATCC BAA-895 / CDC 4225-83 / SGSC4696).